A 383-amino-acid polypeptide reads, in one-letter code: S-adenosylmethionine:tRNA ribosyltransferase-isomerase (383 aa).

This sequence belongs to the QueA family. As to quaternary structure, monomer.

The protein resides in the cytoplasm. It catalyses the reaction 7-aminomethyl-7-carbaguanosine(34) in tRNA + S-adenosyl-L-methionine = epoxyqueuosine(34) in tRNA + adenine + L-methionine + 2 H(+). It functions in the pathway tRNA modification; tRNA-queuosine biosynthesis. In terms of biological role, transfers and isomerizes the ribose moiety from AdoMet to the 7-aminomethyl group of 7-deazaguanine (preQ1-tRNA) to give epoxyqueuosine (oQ-tRNA). This is S-adenosylmethionine:tRNA ribosyltransferase-isomerase from Rickettsia prowazekii (strain Madrid E).